The primary structure comprises 422 residues: Regulator of sigma-W protease RasP (422 aa).

4 helical membrane passes run 6–26 (VIAF…GHLL), 175–195 (IAAG…MLGL), 346–366 (IVNL…VNLL), and 394–414 (EAFV…VVTW). H20 provides a ligand contact to Zn(2+). E21 is an active-site residue. H24 contributes to the Zn(2+) binding site. The 86-residue stretch at 186–271 (AYVILVMLGL…TLHISVTPEA (86 aa)) folds into the PDZ domain.

The protein belongs to the peptidase M50B family. Zn(2+) serves as cofactor.

The protein resides in the cell membrane. In terms of biological role, is responsible for site-2 cleavage of the RsiW anti-sigma factor. This results, after a third proteolytic step catalyzed by the ClpXP protease, in the release of SigW and the transcription activation of the genes under the control of the sigma-W factor. Can also cleave liberated signal peptides of PenP and Mpr, probably within in the cell membrane. This Bacillus subtilis (strain 168) protein is Regulator of sigma-W protease RasP.